The chain runs to 293 residues: tRNA pseudouridine synthase B (293 aa).

Residue aspartate 40 is the Nucleophile of the active site.

The protein belongs to the pseudouridine synthase TruB family. Type 1 subfamily.

It carries out the reaction uridine(55) in tRNA = pseudouridine(55) in tRNA. In terms of biological role, responsible for synthesis of pseudouridine from uracil-55 in the psi GC loop of transfer RNAs. In Mycolicibacterium paratuberculosis (strain ATCC BAA-968 / K-10) (Mycobacterium paratuberculosis), this protein is tRNA pseudouridine synthase B.